The sequence spans 323 residues: Ferrochelatase (323 aa).

The Fe cation site is built by histidine 196 and glutamate 277.

This sequence belongs to the ferrochelatase family.

The protein localises to the cytoplasm. The enzyme catalyses heme b + 2 H(+) = protoporphyrin IX + Fe(2+). It participates in porphyrin-containing compound metabolism; protoheme biosynthesis; protoheme from protoporphyrin-IX: step 1/1. Its function is as follows. Catalyzes the ferrous insertion into protoporphyrin IX. This chain is Ferrochelatase, found in Haemophilus influenzae (strain ATCC 51907 / DSM 11121 / KW20 / Rd).